Consider the following 454-residue polypeptide: Elongation factor Tu, mitochondrial (454 aa).

A mitochondrion-targeting transit peptide spans 1-51; sequence MASVVLRNPSSKRLVPFSSQIYSRCGASVTSSYSISHSIGGDDLSSSTFGT. Residues 65–261 form the tr-type G domain; it reads KPHVNVGTIG…AVDEYIPDPV (197 aa). The G1 stretch occupies residues 74 to 81; sequence GHVDHGKT. 74–81 contacts GTP; that stretch reads GHVDHGKT. Phosphothreonine is present on Thr-82. Positions 115 to 119 are G2; it reads GITIA. Residues 136 to 139 form a G3 region; the sequence is DCPG. GTP contacts are provided by residues 136 to 140 and 191 to 194; these read DCPGH and NKVD. The G4 stretch occupies residues 191–194; that stretch reads NKVD. Residues 229–231 are G5; that stretch reads SAL.

The protein belongs to the TRAFAC class translation factor GTPase superfamily. Classic translation factor GTPase family. EF-Tu/EF-1A subfamily.

It is found in the mitochondrion. Its function is as follows. This protein promotes the GTP-dependent binding of aminoacyl-tRNA to the A-site of ribosomes during protein biosynthesis. This Arabidopsis thaliana (Mouse-ear cress) protein is Elongation factor Tu, mitochondrial (TUFA).